Reading from the N-terminus, the 591-residue chain is Acyl-CoA-dependent acyltransferase MAC1 (591 aa).

The tract at residues 589-591 (ARL) is peroxisomal targeting signal type 1.

The protein belongs to the trichothecene O-acetyltransferase family.

The protein localises to the peroxisome. It functions in the pathway secondary metabolite biosynthesis. In terms of biological role, acyl-CoA-dependent acyltransferase; part of the gene cluster that mediates the biosynthesis of mannosylerythritol lipids (MELs), surface-active substances that enhance the availability of water-insoluble substrates. Mannosylerythritol lipid production is responsible for hemolytic activity of Ustilago maydis. Depending on the number of acetyl groups, mannosylerythritol lipids can be differentiated into MEL A (fully acetylated), MEL B and MEL C (monoacetylated at R-6 and R-4, respectively), and the fully deacetylated MEL D. The first step in the pathway is the generation of mannosylerythritol by the glycosyltransferase EMT1 which catalyzes the transfer of GDP-mannose to the C-4 atom of meso-erythritol. This reaction has to be stereospecific, since only mannosyl-D-erythritol is generated. The produced disaccharide is subsequently acylated with fatty acids of various lengths derived from the peroxisomal beta-oxidation by the peroxisomal acyltransferases MAC1 and MAC2 at positions C-2 and C-3, repectively. The existence of MEL derivatives which carry an acetyl group at C-2 implies that at least MAC1 also accepts acetyl-CoA as a donor. The final step of MEL biosynthesis is the acetylation of the fully acylated mannosylerythritol lipids catalyzed by the acetyl-CoA-dependent acetyltransferase MAT1. MAT1 displays a relaxed regioselectivity and is able to transfer acetylgroups to both positions C-4 and C-6 of the mannosyl moiety. The polypeptide is Acyl-CoA-dependent acyltransferase MAC1 (Mycosarcoma maydis (Corn smut fungus)).